A 236-amino-acid chain; its full sequence is DNA repair protein RecO (236 aa).

Belongs to the RecO family.

Functionally, involved in DNA repair and RecF pathway recombination. The polypeptide is DNA repair protein RecO (Cellvibrio japonicus (strain Ueda107) (Pseudomonas fluorescens subsp. cellulosa)).